The sequence spans 310 residues: Glycerol-3-phosphate dehydrogenase [NAD(P)+] (310 aa).

NADPH is bound by residues W14, R34, R35, and K82. Residues K82 and G110 each contribute to the sn-glycerol 3-phosphate site. S114 contributes to the NADPH binding site. Positions 165, 218, 228, 229, and 230 each coordinate sn-glycerol 3-phosphate. Catalysis depends on K165, which acts as the Proton acceptor. R229 serves as a coordination point for NADPH. E255 contributes to the NADPH binding site.

This sequence belongs to the NAD-dependent glycerol-3-phosphate dehydrogenase family.

It is found in the cytoplasm. It carries out the reaction sn-glycerol 3-phosphate + NAD(+) = dihydroxyacetone phosphate + NADH + H(+). The catalysed reaction is sn-glycerol 3-phosphate + NADP(+) = dihydroxyacetone phosphate + NADPH + H(+). It functions in the pathway membrane lipid metabolism; glycerophospholipid metabolism. Its function is as follows. Catalyzes the reduction of the glycolytic intermediate dihydroxyacetone phosphate (DHAP) to sn-glycerol 3-phosphate (G3P), the key precursor for phospholipid synthesis. This Acaryochloris marina (strain MBIC 11017) protein is Glycerol-3-phosphate dehydrogenase [NAD(P)+].